We begin with the raw amino-acid sequence, 624 residues long: MPDKQKQLRVISLFEHMTSINTPLPRDQIDARLHHLGRLPQGELFSCFHEEDLEEATELYKILYTAKDFDEVINLAKQSRTFVNEGLFVYAVSVALLHRDDCKGIVVPAIQEIFPDRFVPTETINLAVKEAANHPDQDISVHVVETGNILDEEYKLAYFKEDVGTNAHHWHWHIVYPATWDPAFMGRMKDRKGELFYYMHQQMCARYDCERLSNGMRRMIPFSNFDEKLEGYSAHLTSLVSGLPYAFRPDGLCLHDLKDIDLKEMFRWRERILDAIDSGYYIDNEGHQVKLDIVDGINVLGALIESSFETKNKLYYGSLHNWGHVMMARLQDPDHRFNENPGVMSDTSTSLRDPIFYRYHRFIDNIFQKYIATLPHYTPEDLTCPGVHVVNVTVNAKVPNVVTTFMKEAELELSYGIDFGSDHSVKVLYRHLDHEPFTYNISVENSSGGAKDVTMRIFLGPKYDELGNRLQPEQQRTLNIELDKFKATLDPGKNVVTRDHRNSTVTVEQSVPVKKLREEGGVAGEYCSCGWPEHMLIPKGNHRGMDFELFVIVTDYAQDAVNGHGENAECVDAVSYCGAKDQKYPDKKPMGFPFDRVIEGLTFEEFLTVSMSCTDVRIKYTDIK.

6 residues coordinate Cu cation: His-169, His-173, His-200, His-320, His-324, and His-360. Asn-445 carries an N-linked (GlcNAc...) asparagine glycan. An intrachain disulfide couples Cys-529 to Cys-577.

The protein belongs to the tyrosinase family. Hemocyanin subfamily. As to quaternary structure, tarantula hemocyanin is a 24-chain polymer with seven different chains identified. As to expression, hemolymph.

Its subcellular location is the secreted. The protein localises to the extracellular space. Its function is as follows. Hemocyanins are copper-containing oxygen carriers occurring freely dissolved in the hemolymph of many mollusks and arthropods. In Aphonopelma sp. (American tarantula), this protein is Hemocyanin E chain (HCE).